The following is a 414-amino-acid chain: Putative cytochrome P450 126 (414 aa).

Heme is bound at residue Cys-363.

It belongs to the cytochrome P450 family. Heme serves as cofactor.

This Mycobacterium tuberculosis (strain CDC 1551 / Oshkosh) protein is Putative cytochrome P450 126 (cyp126).